The primary structure comprises 107 residues: Large ribosomal subunit protein uL24 (107 aa).

It belongs to the universal ribosomal protein uL24 family. In terms of assembly, part of the 50S ribosomal subunit.

In terms of biological role, one of two assembly initiator proteins, it binds directly to the 5'-end of the 23S rRNA, where it nucleates assembly of the 50S subunit. Its function is as follows. One of the proteins that surrounds the polypeptide exit tunnel on the outside of the subunit. The polypeptide is Large ribosomal subunit protein uL24 (Mesomycoplasma hyopneumoniae (strain 7448) (Mycoplasma hyopneumoniae)).